Here is a 423-residue protein sequence, read N- to C-terminus: Gamma-glutamyl phosphate reductase (423 aa).

The protein belongs to the gamma-glutamyl phosphate reductase family.

It localises to the cytoplasm. It catalyses the reaction L-glutamate 5-semialdehyde + phosphate + NADP(+) = L-glutamyl 5-phosphate + NADPH + H(+). The protein operates within amino-acid biosynthesis; L-proline biosynthesis; L-glutamate 5-semialdehyde from L-glutamate: step 2/2. Catalyzes the NADPH-dependent reduction of L-glutamate 5-phosphate into L-glutamate 5-semialdehyde and phosphate. The product spontaneously undergoes cyclization to form 1-pyrroline-5-carboxylate. The protein is Gamma-glutamyl phosphate reductase of Burkholderia vietnamiensis (strain G4 / LMG 22486) (Burkholderia cepacia (strain R1808)).